The primary structure comprises 278 residues: Pantothenate synthetase (278 aa).

27–34 (MGNLHEGH) is a binding site for ATP. H34 acts as the Proton donor in catalysis. Q58 provides a ligand contact to (R)-pantoate. Q58 contributes to the beta-alanine binding site. 147 to 150 (GEKD) contributes to the ATP binding site. Residue Q153 participates in (R)-pantoate binding. Position 184–187 (184–187 (YSSR)) interacts with ATP.

This sequence belongs to the pantothenate synthetase family. In terms of assembly, homodimer.

It is found in the cytoplasm. It catalyses the reaction (R)-pantoate + beta-alanine + ATP = (R)-pantothenate + AMP + diphosphate + H(+). It functions in the pathway cofactor biosynthesis; (R)-pantothenate biosynthesis; (R)-pantothenate from (R)-pantoate and beta-alanine: step 1/1. Its function is as follows. Catalyzes the condensation of pantoate with beta-alanine in an ATP-dependent reaction via a pantoyl-adenylate intermediate. The chain is Pantothenate synthetase from Acidithiobacillus ferrooxidans (strain ATCC 23270 / DSM 14882 / CIP 104768 / NCIMB 8455) (Ferrobacillus ferrooxidans (strain ATCC 23270)).